The sequence spans 207 residues: LexA repressor (207 aa).

A DNA-binding region (H-T-H motif) is located at residues 28 to 48; sequence VREIGEAVGLASSSTVHGHLS. Active-site for autocatalytic cleavage activity residues include Ser129 and Lys167.

The protein belongs to the peptidase S24 family. As to quaternary structure, homodimer.

The catalysed reaction is Hydrolysis of Ala-|-Gly bond in repressor LexA.. In terms of biological role, represses a number of genes involved in the response to DNA damage (SOS response), including recA and lexA. In the presence of single-stranded DNA, RecA interacts with LexA causing an autocatalytic cleavage which disrupts the DNA-binding part of LexA, leading to derepression of the SOS regulon and eventually DNA repair. This chain is LexA repressor, found in Halalkalibacterium halodurans (strain ATCC BAA-125 / DSM 18197 / FERM 7344 / JCM 9153 / C-125) (Bacillus halodurans).